A 181-amino-acid polypeptide reads, in one-letter code: Shikimate kinase (181 aa).

17–22 contributes to the ATP binding site; sequence GVGKTT. Residue Thr-21 coordinates Mg(2+). Substrate contacts are provided by Asp-39, Arg-63, and Gly-85. Arg-122 is an ATP binding site. Substrate is bound at residue Arg-141.

This sequence belongs to the shikimate kinase family. As to quaternary structure, monomer. Requires Mg(2+) as cofactor.

Its subcellular location is the cytoplasm. The enzyme catalyses shikimate + ATP = 3-phosphoshikimate + ADP + H(+). Its pathway is metabolic intermediate biosynthesis; chorismate biosynthesis; chorismate from D-erythrose 4-phosphate and phosphoenolpyruvate: step 5/7. Catalyzes the specific phosphorylation of the 3-hydroxyl group of shikimic acid using ATP as a cosubstrate. The sequence is that of Shikimate kinase from Nostoc punctiforme (strain ATCC 29133 / PCC 73102).